Here is a 486-residue protein sequence, read N- to C-terminus: Glutamate--tRNA ligase (486 aa).

The 'HIGH' region motif lies at 11–21 (PSPTGLLHIGN). The 'KMSKS' region signature appears at 255–259 (KLSKR). K258 contacts ATP.

This sequence belongs to the class-I aminoacyl-tRNA synthetase family. Glutamate--tRNA ligase type 1 subfamily. Monomer.

It is found in the cytoplasm. It carries out the reaction tRNA(Glu) + L-glutamate + ATP = L-glutamyl-tRNA(Glu) + AMP + diphosphate. Its function is as follows. Catalyzes the attachment of glutamate to tRNA(Glu) in a two-step reaction: glutamate is first activated by ATP to form Glu-AMP and then transferred to the acceptor end of tRNA(Glu). This is Glutamate--tRNA ligase from Streptococcus pneumoniae serotype 19F (strain G54).